Reading from the N-terminus, the 915-residue chain is Alanine--tRNA ligase (915 aa).

4 residues coordinate Zn(2+): histidine 609, histidine 613, cysteine 712, and histidine 716.

It belongs to the class-II aminoacyl-tRNA synthetase family. Zn(2+) serves as cofactor.

Its subcellular location is the cytoplasm. The enzyme catalyses tRNA(Ala) + L-alanine + ATP = L-alanyl-tRNA(Ala) + AMP + diphosphate. Its function is as follows. Catalyzes the attachment of alanine to tRNA(Ala) in a two-step reaction: alanine is first activated by ATP to form Ala-AMP and then transferred to the acceptor end of tRNA(Ala). Also edits incorrectly charged Ser-tRNA(Ala) and Gly-tRNA(Ala) via its editing domain. In Methanoculleus marisnigri (strain ATCC 35101 / DSM 1498 / JR1), this protein is Alanine--tRNA ligase.